The primary structure comprises 247 residues: 3-deoxy-manno-octulosonate cytidylyltransferase (247 aa).

Belongs to the KdsB family.

It localises to the cytoplasm. The catalysed reaction is 3-deoxy-alpha-D-manno-oct-2-ulosonate + CTP = CMP-3-deoxy-beta-D-manno-octulosonate + diphosphate. It functions in the pathway nucleotide-sugar biosynthesis; CMP-3-deoxy-D-manno-octulosonate biosynthesis; CMP-3-deoxy-D-manno-octulosonate from 3-deoxy-D-manno-octulosonate and CTP: step 1/1. The protein operates within bacterial outer membrane biogenesis; lipopolysaccharide biosynthesis. Its function is as follows. Activates KDO (a required 8-carbon sugar) for incorporation into bacterial lipopolysaccharide in Gram-negative bacteria. The polypeptide is 3-deoxy-manno-octulosonate cytidylyltransferase (Chlorobium phaeobacteroides (strain DSM 266 / SMG 266 / 2430)).